Consider the following 250-residue polypeptide: Non-specific acid phosphatase (250 aa).

The N-terminal stretch at 1 to 20 is a signal peptide; the sequence is MKSRYLVFFLPLIVAKYTSA.

This sequence belongs to the class A bacterial acid phosphatase family. In terms of assembly, homodimer.

It localises to the periplasm. It catalyses the reaction a phosphate monoester + H2O = an alcohol + phosphate. This chain is Non-specific acid phosphatase (phoN), found in Salmonella typhimurium (strain LT2 / SGSC1412 / ATCC 700720).